A 694-amino-acid chain; its full sequence is Protein NPGR1 (694 aa).

The segment at 12 to 40 (FEDQPGSPESLATRDFSASGLSSRNGGGD) is disordered. TPR repeat units follow at residues 32–65 (LSSR…SLNY), 66–101 (EEAR…TPRI), 135–168 (LEAI…VENA), 188–221 (QKAL…PWNL), 307–340 (GERW…SESR), 551–584 (TEAW…CYYS), 585–618 (PRGW…EPDH), 620–654 (PSIV…DPRN), and 655–688 (HDAW…ELSA).

In terms of assembly, interacts with calmodulin in a calcium-dependent manner. As to expression, expressed in pollen, flowers, fruits and leaves.

In Arabidopsis thaliana (Mouse-ear cress), this protein is Protein NPGR1.